Consider the following 574-residue polypeptide: 5'-nucleotidase (574 aa).

A signal peptide spans 1–26 (MCPRAARAPATLLLALGAVLWPAAGA). Zn(2+) contacts are provided by aspartate 36 and histidine 38. Cysteine 51 and cysteine 57 are joined by a disulfide. The N-linked (GlcNAc...) asparagine glycan is linked to asparagine 53. Aspartate 85, asparagine 117, histidine 220, and histidine 243 together coordinate Zn(2+). N-linked (GlcNAc...) asparagine glycosylation is found at asparagine 311 and asparagine 333. 2 disulfides stabilise this stretch: cysteine 353/cysteine 358 and cysteine 365/cysteine 387. Residue arginine 354 coordinates AMP. Position 354 (arginine 354) interacts with IMP. Positions 390 and 395 each coordinate AMP. IMP contacts are provided by asparagine 390 and arginine 395. Asparagine 403 carries an N-linked (GlcNAc...) asparagine glycan. Phenylalanine 417 lines the AMP pocket. Phenylalanine 417 lines the IMP pocket. The cysteines at positions 476 and 479 are disulfide-linked. Positions 500 and 506 each coordinate AMP. 2 residues coordinate IMP: phenylalanine 500 and aspartate 506. The GPI-anchor amidated serine moiety is linked to residue serine 549. Residues 550 to 574 (TGSHCHGSFSLIFLSLWAVIFVLYQ) constitute a propeptide, removed in mature form.

The protein belongs to the 5'-nucleotidase family. Homodimer. It depends on Zn(2+) as a cofactor.

Its subcellular location is the cell membrane. It carries out the reaction a ribonucleoside 5'-phosphate + H2O = a ribonucleoside + phosphate. The catalysed reaction is a 2'-deoxyribonucleoside 5'-phosphate + H2O = a 2'-deoxyribonucleoside + phosphate. It catalyses the reaction dTMP + H2O = thymidine + phosphate. The enzyme catalyses CMP + H2O = cytidine + phosphate. It carries out the reaction IMP + H2O = inosine + phosphate. The catalysed reaction is AMP + H2O = adenosine + phosphate. It catalyses the reaction GMP + H2O = guanosine + phosphate. The enzyme catalyses UMP + H2O = uridine + phosphate. It carries out the reaction dAMP + H2O = 2'-deoxyadenosine + phosphate. The catalysed reaction is dCMP + H2O = 2'-deoxycytidine + phosphate. With respect to regulation, inhibited by adenosine 5'-(alpha,beta-methylene)-diphosphate (AMPCP). Catalyzes the hydrolysis of nucleotide monophosphates, releasing inorganic phosphate and the corresponding nucleoside, with AMP being the preferred substrate. Shows a preference for ribonucleotide monophosphates over their equivalent deoxyribose forms. Other substrates include IMP, UMP, GMP, CMP, dAMP, dCMP, dTMP, NAD and NMN. The protein is 5'-nucleotidase (NT5E) of Homo sapiens (Human).